We begin with the raw amino-acid sequence, 203 residues long: Small ribosomal subunit protein uS4 (203 aa).

The S4 RNA-binding domain occupies 93–156 (RRLDNVVYRL…IKVPAILEAV (64 aa)).

The protein belongs to the universal ribosomal protein uS4 family. As to quaternary structure, part of the 30S ribosomal subunit. Contacts protein S5. The interaction surface between S4 and S5 is involved in control of translational fidelity.

One of the primary rRNA binding proteins, it binds directly to 16S rRNA where it nucleates assembly of the body of the 30S subunit. Its function is as follows. With S5 and S12 plays an important role in translational accuracy. The sequence is that of Small ribosomal subunit protein uS4 from Streptococcus suis (strain 98HAH33).